The sequence spans 292 residues: Acetyl-coenzyme A carboxylase carboxyl transferase subunit beta (292 aa).

One can recognise a CoA carboxyltransferase N-terminal domain in the interval 29–292 (LWSKCPECGQ…HGCESRVASS (264 aa)). Zn(2+) contacts are provided by C33, C36, C52, and C55. The C4-type zinc finger occupies 33-55 (CPECGQVVYRKDLLSNASVCGNC).

The protein belongs to the AccD/PCCB family. Acetyl-CoA carboxylase is a heterohexamer composed of biotin carboxyl carrier protein (AccB), biotin carboxylase (AccC) and two subunits each of ACCase subunit alpha (AccA) and ACCase subunit beta (AccD). The cofactor is Zn(2+).

It localises to the cytoplasm. The enzyme catalyses N(6)-carboxybiotinyl-L-lysyl-[protein] + acetyl-CoA = N(6)-biotinyl-L-lysyl-[protein] + malonyl-CoA. Its pathway is lipid metabolism; malonyl-CoA biosynthesis; malonyl-CoA from acetyl-CoA: step 1/1. Functionally, component of the acetyl coenzyme A carboxylase (ACC) complex. Biotin carboxylase (BC) catalyzes the carboxylation of biotin on its carrier protein (BCCP) and then the CO(2) group is transferred by the transcarboxylase to acetyl-CoA to form malonyl-CoA. The sequence is that of Acetyl-coenzyme A carboxylase carboxyl transferase subunit beta from Synechococcus sp. (strain CC9311).